The primary structure comprises 208 residues: Ras-related protein M-Ras (208 aa).

GTP-binding residues include Asp-21, Gly-22, Gly-23, Val-24, Gly-25, Lys-26, Ser-27, Ala-28, Phe-38, Val-39, Pro-40, Tyr-42, Pro-44, and Thr-45. Mg(2+) is bound at residue Ser-27. The short motif at 42 to 50 (YDPTIEDSY) is the Effector region element. The Mg(2+) site is built by Thr-45 and Asp-67. GTP contacts are provided by Gly-70, Asn-126, Lys-127, Asp-129, Ser-156, Ala-157, and Lys-158. Cysteine methyl ester is present on Cys-205. Cys-205 carries S-geranylgeranyl cysteine lipidation. Positions 206 to 208 (VIL) are cleaved as a propeptide — removed in mature form.

This sequence belongs to the small GTPase superfamily. Ras family. As to quaternary structure, component of the SHOC2-MRAS-PP1c (SMP) holophosphatase complex consisting of SHOC2, GTP-bound M-Ras/MRAS and the catalytic subunit of protein phosphatase 1 (either PPP1CA, PPP1CB or PPP1CC). Interacts (active GTP-bound form) with both SHOC2 and PP1c (all isoforms) to form a tertiary complex; SHOC2 and PP1c preferably bind M-Ras/MRAS, but they also bind K-Ras/KRAS, N-Ras/NRAS and H-Ras/HRAS. Interacts with RGL3. Interacts (active GTP-bound form preferentially) with RGS14. The cofactor is Mg(2+). In terms of tissue distribution, expressed in skeletal muscle cells.

Its subcellular location is the cell membrane. It carries out the reaction GTP + H2O = GDP + phosphate + H(+). In terms of biological role, signal transducer in the Ras-MAPK signaling pathway that regulates cell proliferation and survival. Core component of the SHOC2-MRAS-PP1c (SMP) holophosphatase complex that regulates the MAPK pathway activation. The formation of the SMP complex only occurs when MRAS is GTP-bound. MRAS has low intrinsic GTPase activity and may require additional factors for activation. The SMP complex specifically dephosphorylates the inhibitory phosphorylation at 'Ser-259' of RAF1 kinase, 'Ser-365' of BRAF kinase and 'Ser-214' of ARAF kinase, stimulating their kinase activities. The chain is Ras-related protein M-Ras (Mras) from Rattus norvegicus (Rat).